The following is a 433-amino-acid chain: Enolase (433 aa).

The tract at residues 37–59 (RAAVPSGASTGEHEAVELRDGDK) is disordered. Residues 47-59 (GEHEAVELRDGDK) show a composition bias toward basic and acidic residues. Gln-166 contributes to the (2R)-2-phosphoglycerate binding site. Glu-208 (proton donor) is an active-site residue. Mg(2+) is bound by residues Asp-245, Glu-291, and Asp-318. (2R)-2-phosphoglycerate-binding residues include Lys-343, Arg-372, Ser-373, and Lys-394. The active-site Proton acceptor is the Lys-343.

The protein belongs to the enolase family. The cofactor is Mg(2+).

It is found in the cytoplasm. It localises to the secreted. The protein localises to the cell surface. It carries out the reaction (2R)-2-phosphoglycerate = phosphoenolpyruvate + H2O. Its pathway is carbohydrate degradation; glycolysis; pyruvate from D-glyceraldehyde 3-phosphate: step 4/5. Functionally, catalyzes the reversible conversion of 2-phosphoglycerate (2-PG) into phosphoenolpyruvate (PEP). It is essential for the degradation of carbohydrates via glycolysis. In Leptospira biflexa serovar Patoc (strain Patoc 1 / Ames), this protein is Enolase.